Consider the following 151-residue polypeptide: Protein Turandot Z (151 aa).

The N-terminal stretch at 1 to 23 is a signal peptide; that stretch reads MSRLIHLSFVLALLACLTGTISA.

The protein belongs to the Turandot family.

Its subcellular location is the secreted. A humoral factor that may play a role in stress tolerance. In Drosophila persimilis (Fruit fly), this protein is Protein Turandot Z.